The following is a 143-amino-acid chain: Large ribosomal subunit protein uL11 (143 aa).

This sequence belongs to the universal ribosomal protein uL11 family. As to quaternary structure, part of the ribosomal stalk of the 50S ribosomal subunit. Interacts with L10 and the large rRNA to form the base of the stalk. L10 forms an elongated spine to which L12 dimers bind in a sequential fashion forming a multimeric L10(L12)X complex. Post-translationally, one or more lysine residues are methylated.

Functionally, forms part of the ribosomal stalk which helps the ribosome interact with GTP-bound translation factors. This chain is Large ribosomal subunit protein uL11, found in Polynucleobacter asymbioticus (strain DSM 18221 / CIP 109841 / QLW-P1DMWA-1) (Polynucleobacter necessarius subsp. asymbioticus).